Reading from the N-terminus, the 399-residue chain is Succinate--CoA ligase [ADP-forming] subunit beta (399 aa).

The ATP-grasp domain occupies 9-254 (KAVLKSFGAP…TTEEDEKEIE (246 aa)). Residues lysine 46, 53 to 55 (GRG), glutamate 109, alanine 112, and glutamate 117 each bind ATP. 2 residues coordinate Mg(2+): asparagine 209 and aspartate 223. Substrate contacts are provided by residues asparagine 274 and 331 to 333 (GIM).

This sequence belongs to the succinate/malate CoA ligase beta subunit family. In terms of assembly, heterotetramer of two alpha and two beta subunits. The cofactor is Mg(2+).

It catalyses the reaction succinate + ATP + CoA = succinyl-CoA + ADP + phosphate. The enzyme catalyses GTP + succinate + CoA = succinyl-CoA + GDP + phosphate. The protein operates within carbohydrate metabolism; tricarboxylic acid cycle; succinate from succinyl-CoA (ligase route): step 1/1. In terms of biological role, succinyl-CoA synthetase functions in the citric acid cycle (TCA), coupling the hydrolysis of succinyl-CoA to the synthesis of either ATP or GTP and thus represents the only step of substrate-level phosphorylation in the TCA. The beta subunit provides nucleotide specificity of the enzyme and binds the substrate succinate, while the binding sites for coenzyme A and phosphate are found in the alpha subunit. This is Succinate--CoA ligase [ADP-forming] subunit beta from Maricaulis maris (strain MCS10) (Caulobacter maris).